The primary structure comprises 577 residues: Arginine--tRNA ligase (577 aa).

The short motif at 122–132 is the 'HIGH' region element; it reads PNVAKEMHVGH.

It belongs to the class-I aminoacyl-tRNA synthetase family. In terms of assembly, monomer.

It localises to the cytoplasm. It catalyses the reaction tRNA(Arg) + L-arginine + ATP = L-arginyl-tRNA(Arg) + AMP + diphosphate. The polypeptide is Arginine--tRNA ligase (Salmonella arizonae (strain ATCC BAA-731 / CDC346-86 / RSK2980)).